Consider the following 129-residue polypeptide: Large ribosomal subunit protein bL17 (129 aa).

This sequence belongs to the bacterial ribosomal protein bL17 family. Part of the 50S ribosomal subunit. Contacts protein L32.

This Thiobacillus denitrificans (strain ATCC 25259 / T1) protein is Large ribosomal subunit protein bL17.